The sequence spans 705 residues: Translation initiation factor IF-2 (705 aa).

Residues 40 to 124 (DDQIKALDKK…QPAAPKEIPS (85 aa)) are disordered. The span at 41–58 (DQIKALDKKFKKEQKNDN) shows a compositional bias: basic and acidic residues. Positions 59–77 (KQSTQNNHQKSNNQNQNKG) are enriched in low complexity. Basic residues predominate over residues 94–108 (KGNKKNNRNNKKNNK). The tr-type G domain occupies 207–376 (ERPAVVTIMG…GLVAEVQELK (170 aa)). Residues 216–223 (GHVDHGKT) form a G1 region. 216–223 (GHVDHGKT) provides a ligand contact to GTP. The tract at residues 241-245 (GITQH) is G2. The interval 262-265 (DTPG) is G3. GTP is bound by residues 262–266 (DTPGH) and 316–319 (NKID). Residues 316–319 (NKID) are G4. The tract at residues 352-354 (SAL) is G5.

This sequence belongs to the TRAFAC class translation factor GTPase superfamily. Classic translation factor GTPase family. IF-2 subfamily.

It is found in the cytoplasm. Its function is as follows. One of the essential components for the initiation of protein synthesis. Protects formylmethionyl-tRNA from spontaneous hydrolysis and promotes its binding to the 30S ribosomal subunits. Also involved in the hydrolysis of GTP during the formation of the 70S ribosomal complex. The polypeptide is Translation initiation factor IF-2 (Staphylococcus aureus (strain MRSA252)).